We begin with the raw amino-acid sequence, 144 residues long: IgW chain C region, secreted form 1/3 (144 aa).

The Ig-like domain maps to 1–82; that stretch reads VYNQTTAVLG…AGSRFNDRIS (82 aa). Asparagine 3, asparagine 43, and asparagine 123 each carry an N-linked (GlcNAc...) asparagine glycan. Cysteine 11 and cysteine 68 form a disulfide bridge. The interval 87-144 is secretory tail; the sequence is KGGTINLPVPGGNTPCTCPPCSCSGCMPKLVYQTDLNVTLENGGQLQYNCHQQACKIK.

Expressed mainly in lymphoid tissues including spleen, epigonal organ and circulating lymphocytes.

It is found in the secreted. This chain is IgW chain C region, secreted form 1/3, found in Heterodontus francisci (Horn shark).